The chain runs to 190 residues: Xanthine phosphoribosyltransferase (190 aa).

Leu20 and Asn27 together coordinate xanthine. Residue 128–132 coordinates 5-phospho-alpha-D-ribose 1-diphosphate; the sequence is ANGQA. A xanthine-binding site is contributed by Lys156.

It belongs to the purine/pyrimidine phosphoribosyltransferase family. Xpt subfamily. As to quaternary structure, homodimer.

The protein resides in the cytoplasm. It catalyses the reaction XMP + diphosphate = xanthine + 5-phospho-alpha-D-ribose 1-diphosphate. The protein operates within purine metabolism; XMP biosynthesis via salvage pathway; XMP from xanthine: step 1/1. Converts the preformed base xanthine, a product of nucleic acid breakdown, to xanthosine 5'-monophosphate (XMP), so it can be reused for RNA or DNA synthesis. The sequence is that of Xanthine phosphoribosyltransferase from Pediococcus pentosaceus (strain ATCC 25745 / CCUG 21536 / LMG 10740 / 183-1w).